Here is a 436-residue protein sequence, read N- to C-terminus: T-box transcription factor TBX6 (436 aa).

Positions 67–87 (PLLPSALGPETAPPPPEALHS) are disordered. The T-box DNA-binding region spans 100–273 (LWKEFSAVGT…ANPFAKGFRE (174 aa)). Over residues 275-284 (GRNCKRERDA) the composition is skewed to basic and acidic residues. Disordered stretches follow at residues 275–344 (GRNC…CGGP) and 360–383 (PSHLPARTPSFPEAPDPGRPAPYS). Low complexity predominate over residues 332 to 344 (EAASASAPPCGGP).

The protein resides in the nucleus. Functionally, T-box transcription factor that plays an essential role in the determination of the fate of axial stem cells: neural vs mesodermal. Acts in part by down-regulating, a specific enhancer (N1) of SOX2, to inhibit neural development. Seems to also play an essential role in left/right axis determination and acts through effects on Notch signaling around the node as well as through an effect on the morphology and motility of the nodal cilia. This chain is T-box transcription factor TBX6 (Tbx6), found in Rattus norvegicus (Rat).